Consider the following 842-residue polypeptide: Alanine--tRNA ligase (842 aa).

Zn(2+) contacts are provided by histidine 549, histidine 553, cysteine 650, and histidine 654.

It belongs to the class-II aminoacyl-tRNA synthetase family. It depends on Zn(2+) as a cofactor.

The protein localises to the cytoplasm. The enzyme catalyses tRNA(Ala) + L-alanine + ATP = L-alanyl-tRNA(Ala) + AMP + diphosphate. Catalyzes the attachment of alanine to tRNA(Ala) in a two-step reaction: alanine is first activated by ATP to form Ala-AMP and then transferred to the acceptor end of tRNA(Ala). Also edits incorrectly charged Ser-tRNA(Ala) and Gly-tRNA(Ala) via its editing domain. The chain is Alanine--tRNA ligase from Campylobacter jejuni subsp. doylei (strain ATCC BAA-1458 / RM4099 / 269.97).